A 293-amino-acid chain; its full sequence is Urease accessory protein UreD (293 aa).

The tract at residues 1–22 (MAVAQQAWSPGADPAPSAAPVS) is disordered. The segment covering 7–22 (AWSPGADPAPSAAPVS) has biased composition (low complexity).

It belongs to the UreD family. In terms of assembly, ureD, UreF and UreG form a complex that acts as a GTP-hydrolysis-dependent molecular chaperone, activating the urease apoprotein by helping to assemble the nickel containing metallocenter of UreC. The UreE protein probably delivers the nickel.

The protein resides in the cytoplasm. Required for maturation of urease via the functional incorporation of the urease nickel metallocenter. This chain is Urease accessory protein UreD, found in Alkalilimnicola ehrlichii (strain ATCC BAA-1101 / DSM 17681 / MLHE-1).